The sequence spans 214 residues: Probable transaldolase (214 aa).

Lysine 83 functions as the Schiff-base intermediate with substrate in the catalytic mechanism.

This sequence belongs to the transaldolase family. Type 3B subfamily.

Its subcellular location is the cytoplasm. It catalyses the reaction D-sedoheptulose 7-phosphate + D-glyceraldehyde 3-phosphate = D-erythrose 4-phosphate + beta-D-fructose 6-phosphate. It participates in carbohydrate degradation; pentose phosphate pathway; D-glyceraldehyde 3-phosphate and beta-D-fructose 6-phosphate from D-ribose 5-phosphate and D-xylulose 5-phosphate (non-oxidative stage): step 2/3. In terms of biological role, transaldolase is important for the balance of metabolites in the pentose-phosphate pathway. This Streptococcus equi subsp. zooepidemicus (strain MGCS10565) protein is Probable transaldolase.